A 113-amino-acid polypeptide reads, in one-letter code: Ribulose bisphosphate carboxylase small subunit (113 aa).

It belongs to the RuBisCO small chain family. As to quaternary structure, heterohexadecamer of 8 large and 8 small subunits. Forms a CsoS2-CsoS1-RuBisCO complex.

It is found in the carboxysome. Functionally, ruBisCO catalyzes two reactions: the carboxylation of D-ribulose 1,5-bisphosphate, the primary event in carbon dioxide fixation, as well as the oxidative fragmentation of the pentose substrate in the photorespiration process. Both reactions occur simultaneously and in competition at the same active site. Although the small subunit is not catalytic it is essential for maximal activity. There are estimated to be 152 RuBisCO holoenzymes per carboxysome. This is Ribulose bisphosphate carboxylase small subunit from Prochlorococcus marinus subsp. pastoris (strain CCMP1986 / NIES-2087 / MED4).